An 85-amino-acid chain; its full sequence is Phosphocarrier protein HPr (85 aa).

The region spanning methionine 1–glutamate 85 is the HPr domain. Histidine 15 serves as the catalytic Pros-phosphohistidine intermediate.

This sequence belongs to the HPr family.

The protein localises to the cytoplasm. General (non sugar-specific) component of the phosphoenolpyruvate-dependent sugar phosphotransferase system (sugar PTS). This major carbohydrate active-transport system catalyzes the phosphorylation of incoming sugar substrates concomitantly with their translocation across the cell membrane. The phosphoryl group from phosphoenolpyruvate (PEP) is transferred to the phosphoryl carrier protein HPr by enzyme I. Phospho-HPr then transfers it to the PTS EIIA domain. In Haemophilus influenzae (strain ATCC 51907 / DSM 11121 / KW20 / Rd), this protein is Phosphocarrier protein HPr (ptsH).